The sequence spans 247 residues: Type III pantothenate kinase (247 aa).

7 to 14 (AIGNSRWH) is an ATP binding site. Residues Tyr-91 and 95–98 (GLDR) each bind substrate. Asp-97 (proton acceptor) is an active-site residue. K(+) is bound at residue Asp-117. Thr-120 contributes to the ATP binding site.

It belongs to the type III pantothenate kinase family. As to quaternary structure, homodimer. It depends on NH4(+) as a cofactor. K(+) serves as cofactor.

It is found in the cytoplasm. It carries out the reaction (R)-pantothenate + ATP = (R)-4'-phosphopantothenate + ADP + H(+). Its pathway is cofactor biosynthesis; coenzyme A biosynthesis; CoA from (R)-pantothenate: step 1/5. Its function is as follows. Catalyzes the phosphorylation of pantothenate (Pan), the first step in CoA biosynthesis. This Synechococcus sp. (strain ATCC 27144 / PCC 6301 / SAUG 1402/1) (Anacystis nidulans) protein is Type III pantothenate kinase.